The sequence spans 417 residues: Leucine-rich repeat-containing protein 42 (417 aa).

4 LRR repeats span residues Cys167–Leu188, Ser195–Thr215, Lys227–Phe248, and Leu252–Ile273. The interval Phe360–Gln390 is disordered. Residues Arg362–Glu375 are compositionally biased toward basic and acidic residues.

Belongs to the LRRC42 family.

The chain is Leucine-rich repeat-containing protein 42 (lrrc42) from Xenopus laevis (African clawed frog).